The following is an 876-amino-acid chain: Alanine--tRNA ligase (876 aa).

Zn(2+) contacts are provided by histidine 565, histidine 569, cysteine 667, and histidine 671.

This sequence belongs to the class-II aminoacyl-tRNA synthetase family. Zn(2+) serves as cofactor.

It localises to the cytoplasm. The catalysed reaction is tRNA(Ala) + L-alanine + ATP = L-alanyl-tRNA(Ala) + AMP + diphosphate. Its function is as follows. Catalyzes the attachment of alanine to tRNA(Ala) in a two-step reaction: alanine is first activated by ATP to form Ala-AMP and then transferred to the acceptor end of tRNA(Ala). Also edits incorrectly charged Ser-tRNA(Ala) and Gly-tRNA(Ala) via its editing domain. This is Alanine--tRNA ligase from Staphylococcus saprophyticus subsp. saprophyticus (strain ATCC 15305 / DSM 20229 / NCIMB 8711 / NCTC 7292 / S-41).